Reading from the N-terminus, the 151-residue chain is SsrA-binding protein (151 aa).

The protein belongs to the SmpB family.

It is found in the cytoplasm. Its function is as follows. Required for rescue of stalled ribosomes mediated by trans-translation. Binds to transfer-messenger RNA (tmRNA), required for stable association of tmRNA with ribosomes. tmRNA and SmpB together mimic tRNA shape, replacing the anticodon stem-loop with SmpB. tmRNA is encoded by the ssrA gene; the 2 termini fold to resemble tRNA(Ala) and it encodes a 'tag peptide', a short internal open reading frame. During trans-translation Ala-aminoacylated tmRNA acts like a tRNA, entering the A-site of stalled ribosomes, displacing the stalled mRNA. The ribosome then switches to translate the ORF on the tmRNA; the nascent peptide is terminated with the 'tag peptide' encoded by the tmRNA and targeted for degradation. The ribosome is freed to recommence translation, which seems to be the essential function of trans-translation. The sequence is that of SsrA-binding protein from Geotalea uraniireducens (strain Rf4) (Geobacter uraniireducens).